The primary structure comprises 426 residues: Enolase (426 aa).

Gln163 serves as a coordination point for (2R)-2-phosphoglycerate. Glu205 (proton donor) is an active-site residue. Residues Asp242, Glu283, and Asp310 each coordinate Mg(2+). Residues Lys335, Arg364, Ser365, and Lys386 each contribute to the (2R)-2-phosphoglycerate site. Residue Lys335 is the Proton acceptor of the active site.

Belongs to the enolase family. Requires Mg(2+) as cofactor.

Its subcellular location is the cytoplasm. It localises to the secreted. The protein resides in the cell surface. It catalyses the reaction (2R)-2-phosphoglycerate = phosphoenolpyruvate + H2O. Its pathway is carbohydrate degradation; glycolysis; pyruvate from D-glyceraldehyde 3-phosphate: step 4/5. Catalyzes the reversible conversion of 2-phosphoglycerate (2-PG) into phosphoenolpyruvate (PEP). It is essential for the degradation of carbohydrates via glycolysis. The chain is Enolase from Paenarthrobacter aurescens (strain TC1).